Consider the following 359-residue polypeptide: Histidinol-phosphate aminotransferase (359 aa).

An N6-(pyridoxal phosphate)lysine modification is found at Lys212.

The protein belongs to the class-II pyridoxal-phosphate-dependent aminotransferase family. Histidinol-phosphate aminotransferase subfamily. In terms of assembly, homodimer. Requires pyridoxal 5'-phosphate as cofactor.

The catalysed reaction is L-histidinol phosphate + 2-oxoglutarate = 3-(imidazol-4-yl)-2-oxopropyl phosphate + L-glutamate. It participates in amino-acid biosynthesis; L-histidine biosynthesis; L-histidine from 5-phospho-alpha-D-ribose 1-diphosphate: step 7/9. The chain is Histidinol-phosphate aminotransferase from Buchnera aphidicola subsp. Melaphis rhois.